Reading from the N-terminus, the 248-residue chain is Tetrachloro-P-hydroquinone reductive dehalogenase (248 aa).

Residues 2-84 (PEVSLYNYTM…EAAKLGKVGI (83 aa)) form the GST N-terminal domain. One can recognise a GST C-terminal domain in the interval 133–248 (YAEKYPELRS…RVMPNWKGGI (116 aa)).

Belongs to the GST superfamily. Homodimer.

The catalysed reaction is 2,6-dichlorohydroquinone + glutathione disulfide + chloride + H(+) = 2,3,6-trichlorohydroquinone + 2 glutathione. It carries out the reaction 2,3,6-trichlorohydroquinone + glutathione disulfide + chloride = 2,3,5,6-tetrachlorohydroquinone + 2 glutathione. The protein operates within xenobiotic degradation; pentachlorophenol degradation. Functionally, sequential reduction of tetrachloro-p-hydroquinone to monochlorophenol, using glutathione as the reducing agent. This chain is Tetrachloro-P-hydroquinone reductive dehalogenase (pcpC), found in Sphingobium chlorophenolicum.